The following is a 423-amino-acid chain: Endochitinase 42 (423 aa).

Positions 1–22 are cleaved as a signal peptide; sequence MLSFLGKSVALLAALQATLSSP. A propeptide spanning residues 23-34 is cleaved from the precursor; sequence KPGHRRASVEKR. One can recognise a GH18 domain in the interval 38 to 401; the sequence is YANSVYFTNW…GTSHRALGGL (364 aa). Chitin contacts are provided by residues 102-103 and 129-132; these read GT and GGWT. Catalysis depends on glutamate 171, which acts as the Proton donor. Tyrosine 172 is a chitin binding site. Asparagine 218 carries N-linked (GlcNAc...) asparagine glycosylation. Chitin-binding positions include 237–240 and tryptophan 378; that span reads MAYD.

This sequence belongs to the glycosyl hydrolase 18 family. Chitinase class V subfamily.

The protein localises to the secreted. The enzyme catalyses Random endo-hydrolysis of N-acetyl-beta-D-glucosaminide (1-&gt;4)-beta-linkages in chitin and chitodextrins.. Secreted chitinase involved in the degradation of chitin, a component of the cell walls of fungi and exoskeletal elements of some animals (including worms and arthropods). Plays a morphogenetic role during apical growth, cell division and differentiation (cell wall morphogenesis). Also acts as an antifungal agent. Involved in the degradation and further assimilation of phytopathogenic fungi, namely mycoparasitism, the major mechanism accounting for the antagonistic activity against phytopathogenic fungi displayed by Trichoderma. This is Endochitinase 42 (chit42) from Trichoderma harzianum (Hypocrea lixii).